A 326-amino-acid polypeptide reads, in one-letter code: Beta-ketoacyl-[acyl-carrier-protein] synthase III (326 aa).

Active-site residues include Cys-120 and His-253. The interval 254–258 is ACP-binding; sequence QANIR. Asn-283 is an active-site residue.

It belongs to the thiolase-like superfamily. FabH family. As to quaternary structure, homodimer.

The protein localises to the cytoplasm. The enzyme catalyses malonyl-[ACP] + acetyl-CoA + H(+) = 3-oxobutanoyl-[ACP] + CO2 + CoA. It functions in the pathway lipid metabolism; fatty acid biosynthesis. In terms of biological role, catalyzes the condensation reaction of fatty acid synthesis by the addition to an acyl acceptor of two carbons from malonyl-ACP. Catalyzes the first condensation reaction which initiates fatty acid synthesis and may therefore play a role in governing the total rate of fatty acid production. Possesses both acetoacetyl-ACP synthase and acetyl transacylase activities. Its substrate specificity determines the biosynthesis of branched-chain and/or straight-chain of fatty acids. The protein is Beta-ketoacyl-[acyl-carrier-protein] synthase III of Cupriavidus pinatubonensis (strain JMP 134 / LMG 1197) (Cupriavidus necator (strain JMP 134)).